Consider the following 353-residue polypeptide: 4-hydroxy-3-methylbut-2-en-1-yl diphosphate synthase (flavodoxin) (353 aa).

Residues Cys268, Cys271, Cys303, and Glu310 each contribute to the [4Fe-4S] cluster site.

Belongs to the IspG family. [4Fe-4S] cluster is required as a cofactor.

It catalyses the reaction (2E)-4-hydroxy-3-methylbut-2-enyl diphosphate + oxidized [flavodoxin] + H2O + 2 H(+) = 2-C-methyl-D-erythritol 2,4-cyclic diphosphate + reduced [flavodoxin]. The protein operates within isoprenoid biosynthesis; isopentenyl diphosphate biosynthesis via DXP pathway; isopentenyl diphosphate from 1-deoxy-D-xylulose 5-phosphate: step 5/6. Converts 2C-methyl-D-erythritol 2,4-cyclodiphosphate (ME-2,4cPP) into 1-hydroxy-2-methyl-2-(E)-butenyl 4-diphosphate. This Ruminiclostridium cellulolyticum (strain ATCC 35319 / DSM 5812 / JCM 6584 / H10) (Clostridium cellulolyticum) protein is 4-hydroxy-3-methylbut-2-en-1-yl diphosphate synthase (flavodoxin).